A 166-amino-acid polypeptide reads, in one-letter code: NADH-ubiquinone oxidoreductase chain 6 (166 aa).

The next 5 membrane-spanning stretches (helical) occupy residues 1–21 (MMYFVYLLSILLVLGFMAFAS), 26–46 (IYGGLSLVLSGGVGCGIVVSL), 47–67 (GGSFLGLIVFLVYLGGMLVVF), 87–107 (VFTNLLIMVGMLGVIWYYFSG), and 139–159 (CGGWELIFSGWILFLTIFVVL).

It belongs to the complex I subunit 6 family. In terms of assembly, core subunit of respiratory chain NADH dehydrogenase (Complex I) which is composed of 45 different subunits.

The protein resides in the mitochondrion inner membrane. It carries out the reaction a ubiquinone + NADH + 5 H(+)(in) = a ubiquinol + NAD(+) + 4 H(+)(out). Functionally, core subunit of the mitochondrial membrane respiratory chain NADH dehydrogenase (Complex I) which catalyzes electron transfer from NADH through the respiratory chain, using ubiquinone as an electron acceptor. Essential for the catalytic activity and assembly of complex I. This chain is NADH-ubiquinone oxidoreductase chain 6 (MT-ND6), found in Ornithorhynchus anatinus (Duckbill platypus).